The sequence spans 698 residues: Polyribonucleotide nucleotidyltransferase (698 aa).

Mg(2+) contacts are provided by aspartate 485 and aspartate 491. The 60-residue stretch at 552–611 (PRITTIKINPEKIRDVIGKGGAVIRALTEETGTTIELDDNGTVKIASSNGEATKEAIRRI) folds into the KH domain. The S1 motif domain maps to 621-689 (GRIYNGKVIR…RQGRVRLSIK (69 aa)).

Belongs to the polyribonucleotide nucleotidyltransferase family. Component of the RNA degradosome, which is a multiprotein complex involved in RNA processing and mRNA degradation. Requires Mg(2+) as cofactor.

It localises to the cytoplasm. It catalyses the reaction RNA(n+1) + phosphate = RNA(n) + a ribonucleoside 5'-diphosphate. Functionally, involved in mRNA degradation. Catalyzes the phosphorolysis of single-stranded polyribonucleotides processively in the 3'- to 5'-direction. The protein is Polyribonucleotide nucleotidyltransferase of Shewanella frigidimarina (strain NCIMB 400).